The chain runs to 418 residues: Tryptophan synthase beta chain (418 aa).

Over residues 1-12 (MTSTLPTANTPD) the composition is skewed to polar residues. Residues 1 to 21 (MTSTLPTANTPDPASLMPSVR) are disordered. Lys111 is subject to N6-(pyridoxal phosphate)lysine.

The protein belongs to the TrpB family. In terms of assembly, tetramer of two alpha and two beta chains. Requires pyridoxal 5'-phosphate as cofactor.

It catalyses the reaction (1S,2R)-1-C-(indol-3-yl)glycerol 3-phosphate + L-serine = D-glyceraldehyde 3-phosphate + L-tryptophan + H2O. It participates in amino-acid biosynthesis; L-tryptophan biosynthesis; L-tryptophan from chorismate: step 5/5. In terms of biological role, the beta subunit is responsible for the synthesis of L-tryptophan from indole and L-serine. This chain is Tryptophan synthase beta chain, found in Synechococcus sp. (strain CC9311).